A 159-amino-acid polypeptide reads, in one-letter code: S-ribosylhomocysteine lyase 1 (159 aa).

Residues H54, H58, and C124 each contribute to the Fe cation site.

Belongs to the LuxS family. Homodimer. Requires Fe cation as cofactor.

The catalysed reaction is S-(5-deoxy-D-ribos-5-yl)-L-homocysteine = (S)-4,5-dihydroxypentane-2,3-dione + L-homocysteine. Its function is as follows. Involved in the synthesis of autoinducer 2 (AI-2) which is secreted by bacteria and is used to communicate both the cell density and the metabolic potential of the environment. The regulation of gene expression in response to changes in cell density is called quorum sensing. Catalyzes the transformation of S-ribosylhomocysteine (RHC) to homocysteine (HC) and 4,5-dihydroxy-2,3-pentadione (DPD). In Lactobacillus delbrueckii subsp. bulgaricus (strain ATCC BAA-365 / Lb-18), this protein is S-ribosylhomocysteine lyase 1.